A 223-amino-acid chain; its full sequence is Cytidylate kinase (223 aa).

10–18 (GPASSGKST) contributes to the ATP binding site.

This sequence belongs to the cytidylate kinase family. Type 1 subfamily.

The protein resides in the cytoplasm. It carries out the reaction CMP + ATP = CDP + ADP. The enzyme catalyses dCMP + ATP = dCDP + ADP. In Streptococcus pneumoniae (strain 70585), this protein is Cytidylate kinase.